The primary structure comprises 129 residues: Glycine cleavage system H protein (129 aa).

In terms of domain architecture, Lipoyl-binding spans 24 to 106; it reads HAVVGITDFA…YDGGWLFKLA (83 aa). Lysine 65 carries the N6-lipoyllysine modification.

The protein belongs to the GcvH family. The glycine cleavage system is composed of four proteins: P, T, L and H. (R)-lipoate is required as a cofactor.

The glycine cleavage system catalyzes the degradation of glycine. The H protein shuttles the methylamine group of glycine from the P protein to the T protein. The sequence is that of Glycine cleavage system H protein from Hydrogenovibrio crunogenus (strain DSM 25203 / XCL-2) (Thiomicrospira crunogena).